A 380-amino-acid chain; its full sequence is Glucose-1-phosphate adenylyltransferase (380 aa).

Residues Gly164, 179-180 (EK), and Ser190 contribute to the alpha-D-glucose 1-phosphate site.

It belongs to the bacterial/plant glucose-1-phosphate adenylyltransferase family. Homotetramer.

The catalysed reaction is alpha-D-glucose 1-phosphate + ATP + H(+) = ADP-alpha-D-glucose + diphosphate. It functions in the pathway glycan biosynthesis; glycogen biosynthesis. Its function is as follows. Involved in the biosynthesis of ADP-glucose, a building block required for the elongation reactions to produce glycogen. Catalyzes the reaction between ATP and alpha-D-glucose 1-phosphate (G1P) to produce pyrophosphate and ADP-Glc. This Lactococcus lactis subsp. cremoris (strain MG1363) protein is Glucose-1-phosphate adenylyltransferase.